We begin with the raw amino-acid sequence, 154 residues long: Nuclear cap-binding protein subunit 2 (154 aa).

MRNA is bound by residues Tyr10, Tyr33, 102–106 (RVDWD), 113–117 (RQYGR), and 123–124 (QV). The RRM domain occupies 30–108 (CTLYVGNLSF…RLIRVDWDAG (79 aa)).

Belongs to the RRM NCBP2 family. As to quaternary structure, component of the nuclear cap-binding complex (CBC), a heterodimer composed of Cbp80 and Cbp20 that interacts with m7GpppG-capped RNA. Interacts with Ars2.

The protein resides in the nucleus. Functionally, component of the cap-binding complex (CBC), which binds co-transcriptionally to the 5' cap of pre-mRNAs and is involved in various processes such as pre-mRNA splicing and RNA-mediated gene silencing (RNAi). The CBC complex is involved in miRNA-mediated RNA interference via its interaction with Ars2 and is required for primary microRNAs (miRNAs) processing. Also involved in innate immunity via the short interfering RNAs (siRNAs) processing machinery by restricting the viral RNA production. In the CBC complex, Cbp20 recognizes and binds capped RNAs (m7GpppG-capped RNA) but requires Cbp80 to stabilize the movement of its N-terminal loop and lock the CBC into a high affinity cap-binding state with the cap structure. The chain is Nuclear cap-binding protein subunit 2 (Cbp20) from Drosophila erecta (Fruit fly).